A 173-amino-acid chain; its full sequence is uncharacterized protein (173 aa).

The N-terminal stretch at Met-1–Gly-20 is a signal peptide. A glycan (N-linked (GlcNAc...) asparagine) is linked at Asn-53.

Component of the acid-insoluble organic matrix of calcified shell layers (at protein level).

The protein localises to the secreted. This is an uncharacterized protein from Haliotis asinina (Donkey's ear abalone).